A 252-amino-acid polypeptide reads, in one-letter code: Fructose-1,6-bisphosphatase/inositol-1-monophosphatase (252 aa).

Mg(2+)-binding residues include Glu-65, Asp-81, Ile-83, and Asp-84. Substrate-binding positions include 84-86 (DGS), Arg-170, Phe-175, and Arg-194. Asp-201 is a Mg(2+) binding site.

It belongs to the inositol monophosphatase superfamily. FBPase class 4 family. In terms of assembly, homodimer. Requires Mg(2+) as cofactor.

The enzyme catalyses beta-D-fructose 1,6-bisphosphate + H2O = beta-D-fructose 6-phosphate + phosphate. The catalysed reaction is a myo-inositol phosphate + H2O = myo-inositol + phosphate. IMPase activity is inhibited by Ca(2+) and Zn(2+). In contrast to mammalian I-1-P phosphatases, is not inhibited by Li(+) up to 100 mM. Functionally, phosphatase with broad specificity; it can dephosphorylate fructose 1,6-bisphosphate, both D and L isomers of inositol-1-phosphate (I-1-P), 2'-AMP, pNPP, beta-glycerol phosphate, and alpha-D-glucose-1-phosphate. Cannot hydrolyze glucose-6-phosphate, fructose-6-phosphate, NAD(+) or 5'-AMP. May be involved in the biosynthesis of a unique osmolyte, di-myo-inositol 1,1-phosphate. This Methanocaldococcus jannaschii (strain ATCC 43067 / DSM 2661 / JAL-1 / JCM 10045 / NBRC 100440) (Methanococcus jannaschii) protein is Fructose-1,6-bisphosphatase/inositol-1-monophosphatase (suhB).